We begin with the raw amino-acid sequence, 308 residues long: Ornithine carbamoyltransferase (308 aa).

Carbamoyl phosphate-binding positions include 52–55 (STRT), Gln79, Arg103, and 130–133 (HPLQ). Residues Asn162, Asp224, and 228–229 (SM) each bind L-ornithine. Carbamoyl phosphate contacts are provided by residues 264 to 265 (CL) and Arg292.

It belongs to the aspartate/ornithine carbamoyltransferase superfamily. OTCase family.

The protein resides in the cytoplasm. It carries out the reaction carbamoyl phosphate + L-ornithine = L-citrulline + phosphate + H(+). It participates in amino-acid biosynthesis; L-arginine biosynthesis; L-arginine from L-ornithine and carbamoyl phosphate: step 1/3. Reversibly catalyzes the transfer of the carbamoyl group from carbamoyl phosphate (CP) to the N(epsilon) atom of ornithine (ORN) to produce L-citrulline. This is Ornithine carbamoyltransferase from Pyrobaculum calidifontis (strain DSM 21063 / JCM 11548 / VA1).